Reading from the N-terminus, the 741-residue chain is Transketolase, chloroplastic (741 aa).

The transit peptide at 1-67 (MASSSSLTLS…TKQQFSVRAS (67 aa)) directs the protein to the chloroplast. H103 provides a ligand contact to substrate. Thiamine diphosphate-binding positions include H143 and 192 to 194 (GPL). D233 contacts Mg(2+). Thiamine diphosphate contacts are provided by G234 and N263. N263 and I265 together coordinate Mg(2+). Residues H340, R434, and S461 each coordinate substrate. Position 340 (H340) interacts with thiamine diphosphate. Thiamine diphosphate is bound by residues E488 and F515. Catalysis depends on E488, which acts as the Proton donor. Residues H539, D547, and R598 each coordinate substrate.

The protein belongs to the transketolase family. Homodimer. Mg(2+) is required as a cofactor. It depends on Ca(2+) as a cofactor. Mn(2+) serves as cofactor. The cofactor is Co(2+). Requires thiamine diphosphate as cofactor.

The protein localises to the plastid. It localises to the chloroplast thylakoid membrane. The enzyme catalyses D-sedoheptulose 7-phosphate + D-glyceraldehyde 3-phosphate = aldehydo-D-ribose 5-phosphate + D-xylulose 5-phosphate. It functions in the pathway carbohydrate biosynthesis; Calvin cycle. Functionally, catalyzes the reversible transfer of a two-carbon ketol group from fructose-6-phosphate or sedoheptulose-7-phosphate to glyceraldehyde-3-phosphate to yield xylulose-5-phosphate and erythrose-4-phosphate or ribose-5-phosphate, respectively. The protein is Transketolase, chloroplastic of Solanum tuberosum (Potato).